A 316-amino-acid polypeptide reads, in one-letter code: Pantothenate kinase (316 aa).

96–103 (GSVAVGKS) serves as a coordination point for ATP.

This sequence belongs to the prokaryotic pantothenate kinase family.

It is found in the cytoplasm. The catalysed reaction is (R)-pantothenate + ATP = (R)-4'-phosphopantothenate + ADP + H(+). Its pathway is cofactor biosynthesis; coenzyme A biosynthesis; CoA from (R)-pantothenate: step 1/5. This chain is Pantothenate kinase, found in Shouchella clausii (strain KSM-K16) (Alkalihalobacillus clausii).